Reading from the N-terminus, the 155-residue chain is SsrA-binding protein (155 aa).

This sequence belongs to the SmpB family.

It localises to the cytoplasm. Required for rescue of stalled ribosomes mediated by trans-translation. Binds to transfer-messenger RNA (tmRNA), required for stable association of tmRNA with ribosomes. tmRNA and SmpB together mimic tRNA shape, replacing the anticodon stem-loop with SmpB. tmRNA is encoded by the ssrA gene; the 2 termini fold to resemble tRNA(Ala) and it encodes a 'tag peptide', a short internal open reading frame. During trans-translation Ala-aminoacylated tmRNA acts like a tRNA, entering the A-site of stalled ribosomes, displacing the stalled mRNA. The ribosome then switches to translate the ORF on the tmRNA; the nascent peptide is terminated with the 'tag peptide' encoded by the tmRNA and targeted for degradation. The ribosome is freed to recommence translation, which seems to be the essential function of trans-translation. The sequence is that of SsrA-binding protein from Streptococcus sanguinis (strain SK36).